We begin with the raw amino-acid sequence, 576 residues long: Aspartate--tRNA ligase, cytoplasmic 1 (576 aa).

The tract at residues 1 to 78 (MSETTPVPVG…NWGELPMNQS (78 aa)) is disordered. The segment covering 20 to 43 (LKKEQKKLEKEKKIAEAKAKKAAE) has biased composition (basic and acidic residues). Glu302 is an L-aspartate binding site. Residues 324-327 (QLYK) form an aspartate region. Arg346 is an L-aspartate binding site. Residues 346-348 (RAE), 354-356 (RHL), and Glu499 contribute to the ATP site. 2 residues coordinate L-aspartate: Ser502 and Arg506. 547–550 (GLER) is a binding site for ATP.

It belongs to the class-II aminoacyl-tRNA synthetase family. Type 2 subfamily.

It localises to the cytoplasm. It catalyses the reaction tRNA(Asp) + L-aspartate + ATP = L-aspartyl-tRNA(Asp) + AMP + diphosphate. The sequence is that of Aspartate--tRNA ligase, cytoplasmic 1 (aspS1) from Dictyostelium discoideum (Social amoeba).